The following is a 90-amino-acid chain: Small ribosomal subunit protein uS15 (90 aa).

It belongs to the universal ribosomal protein uS15 family. Part of the 30S ribosomal subunit. Forms a bridge to the 50S subunit in the 70S ribosome, contacting the 23S rRNA.

One of the primary rRNA binding proteins, it binds directly to 16S rRNA where it helps nucleate assembly of the platform of the 30S subunit by binding and bridging several RNA helices of the 16S rRNA. Its function is as follows. Forms an intersubunit bridge (bridge B4) with the 23S rRNA of the 50S subunit in the ribosome. The sequence is that of Small ribosomal subunit protein uS15 from Campylobacter jejuni subsp. jejuni serotype O:6 (strain 81116 / NCTC 11828).